The sequence spans 167 residues: 16S rRNA aminocarboxypropyltransferase (167 aa).

S-adenosyl-L-methionine-binding residues include T17, V62, L84, Y99, and S103.

It belongs to the TDD superfamily. TSR3 family.

It localises to the cytoplasm. The enzyme catalyses an N(1)-methylpseudouridine in rRNA + S-adenosyl-L-methionine = N(1)-methyl-N(3)-[(3S)-3-amino-3-carboxypropyl]pseudouridine in rRNA + S-methyl-5'-thioadenosine + H(+). Functionally, aminocarboxypropyltransferase that catalyzes the aminocarboxypropyl transfer on pseudouridine corresponding to position 914 in M.jannaschii 16S rRNA. It constitutes the last step in biosynthesis of the hypermodified N1-methyl-N3-(3-amino-3-carboxypropyl) pseudouridine (m1acp3-Psi). This is 16S rRNA aminocarboxypropyltransferase from Sulfurisphaera tokodaii (strain DSM 16993 / JCM 10545 / NBRC 100140 / 7) (Sulfolobus tokodaii).